A 98-amino-acid chain; its full sequence is Ribonuclease kappa (98 aa).

2 helical membrane passes run alanine 13–phenylalanine 33 and valine 65–cysteine 85.

The protein belongs to the RNase K family. As to quaternary structure, interacts with the proton translocation complex V0 of the V-ATPase. Interacts with ATP6AP1. As to expression, expressed in brain (at protein level).

The protein localises to the endomembrane system. It is found in the cytoplasmic vesicle. The protein resides in the clathrin-coated vesicle membrane. Functionally, endoribonuclease which preferentially cleaves ApU and ApG phosphodiester bonds. Hydrolyzes UpU bonds at a lower rate. Regulates the activity of vacuolar (H+)-ATPase (V-ATPase) which is responsible for acidifying and maintaining the pH of intracellular compartments. Required at an early stage of receptor-mediated endocytosis. The sequence is that of Ribonuclease kappa (RNASEK) from Bos taurus (Bovine).